The primary structure comprises 162 residues: AP-1 complex subunit sigma-2 (162 aa).

It belongs to the adaptor complexes small subunit family. Adaptor protein complex 1 (AP-1) is a heterotetramer composed of two large adaptins (gamma-type subunit and beta-type subunit), a medium adaptin (mu-type subunit) and a small adaptin (sigma-type subunit). As to expression, expressed in roots, stems, leaves, flowers and siliques (developing fruits and seeds).

It is found in the golgi apparatus. The protein resides in the cytoplasmic vesicle. The protein localises to the clathrin-coated vesicle membrane. Functionally, subunit of clathrin-associated adaptor protein complex 1 that plays a role in protein sorting at the trans-Golgi network and early endosomes (TGN/EE). The AP complexes mediate the recruitment of clathrin to membranes and the recognition of sorting signals within the cytosolic tails of transmembrane cargo molecules. This is AP-1 complex subunit sigma-2 (AAP19-2) from Arabidopsis thaliana (Mouse-ear cress).